A 199-amino-acid chain; its full sequence is GTP cyclohydrolase-2 (199 aa).

GTP is bound at residue 49-53 (RIHSE). Residues cysteine 54, cysteine 65, and cysteine 67 each coordinate Zn(2+). GTP is bound by residues glutamine 70, 92–94 (EGR), and threonine 114. Aspartate 126 (proton acceptor) is an active-site residue. Arginine 128 acts as the Nucleophile in catalysis. The GTP site is built by threonine 149 and lysine 154.

It belongs to the GTP cyclohydrolase II family. Homodimer. Requires Zn(2+) as cofactor.

It catalyses the reaction GTP + 4 H2O = 2,5-diamino-6-hydroxy-4-(5-phosphoribosylamino)-pyrimidine + formate + 2 phosphate + 3 H(+). Its pathway is cofactor biosynthesis; riboflavin biosynthesis; 5-amino-6-(D-ribitylamino)uracil from GTP: step 1/4. Functionally, catalyzes the conversion of GTP to 2,5-diamino-6-ribosylamino-4(3H)-pyrimidinone 5'-phosphate (DARP), formate and pyrophosphate. The chain is GTP cyclohydrolase-2 from Blochmanniella pennsylvanica (strain BPEN).